The following is a 190-amino-acid chain: Holliday junction branch migration complex subunit RuvA (190 aa).

The segment at 1–64 (MIGRISGQLA…EDAQILYGFG (64 aa)) is domain I. A domain II region spans residues 65–137 (SATERAAFRQ…LKGKLGADIG (73 aa)). Residues 137 to 141 (GVQVS) are flexible linker. Residues 142 to 190 (VSSDSQSDILQALVALGYSDRDAALALKALPKDIGVSDGIKLALKALAK) are domain III.

This sequence belongs to the RuvA family. Homotetramer. Forms an RuvA(8)-RuvB(12)-Holliday junction (HJ) complex. HJ DNA is sandwiched between 2 RuvA tetramers; dsDNA enters through RuvA and exits via RuvB. An RuvB hexamer assembles on each DNA strand where it exits the tetramer. Each RuvB hexamer is contacted by two RuvA subunits (via domain III) on 2 adjacent RuvB subunits; this complex drives branch migration. In the full resolvosome a probable DNA-RuvA(4)-RuvB(12)-RuvC(2) complex forms which resolves the HJ.

The protein resides in the cytoplasm. Its function is as follows. The RuvA-RuvB-RuvC complex processes Holliday junction (HJ) DNA during genetic recombination and DNA repair, while the RuvA-RuvB complex plays an important role in the rescue of blocked DNA replication forks via replication fork reversal (RFR). RuvA specifically binds to HJ cruciform DNA, conferring on it an open structure. The RuvB hexamer acts as an ATP-dependent pump, pulling dsDNA into and through the RuvAB complex. HJ branch migration allows RuvC to scan DNA until it finds its consensus sequence, where it cleaves and resolves the cruciform DNA. This is Holliday junction branch migration complex subunit RuvA from Polaromonas sp. (strain JS666 / ATCC BAA-500).